A 110-amino-acid chain; its full sequence is UPF0060 membrane protein Bcen_0802 (110 aa).

The next 4 helical transmembrane spans lie at 9–29, 34–54, 66–86, and 88–108; these read ALFA…WLVL, PAWL…LLTL, YGGV…GVAL, and RWDV…ALQP.

Belongs to the UPF0060 family.

It localises to the cell inner membrane. The chain is UPF0060 membrane protein Bcen_0802 from Burkholderia orbicola (strain AU 1054).